The chain runs to 299 residues: GTPase Era (299 aa).

Residues 4–171 (KSGFVAILGR…VDILSENLGE (168 aa)) enclose the Era-type G domain. The interval 12–19 (GRPNVGKS) is G1. GTP is bound at residue 12-19 (GRPNVGKS). Residues 38-42 (QTTRN) form a G2 region. The tract at residues 59 to 62 (DTPG) is G3. Residues 59-63 (DTPGI) and 121-124 (NKID) contribute to the GTP site. The segment at 121-124 (NKID) is G4. The interval 150 to 152 (ISA) is G5. In terms of domain architecture, KH type-2 spans 202-280 (TREEIPHSVA…FLETWVKVKK (79 aa)).

This sequence belongs to the TRAFAC class TrmE-Era-EngA-EngB-Septin-like GTPase superfamily. Era GTPase family. In terms of assembly, monomer.

The protein localises to the cytoplasm. The protein resides in the cell membrane. An essential GTPase that binds both GDP and GTP, with rapid nucleotide exchange. Plays a role in 16S rRNA processing and 30S ribosomal subunit biogenesis and possibly also in cell cycle regulation and energy metabolism. This is GTPase Era from Streptococcus pneumoniae (strain JJA).